The chain runs to 536 residues: MSSFQVYRAALLLSILATANAQQVGTYTTETHPSLTWQTCTSDGSCTTNDGEVVIDANWRWVHSTSSATNCYTGNEWDTSICTDDVTCAANCALDGATYEATYGVTTSGSELRLNFVTQGSSKNIGSRLYLMSDDSNYELFKLLGQEFTFDVDVSNLPCGLNGALYFVAMDADGGTSEYSGNKAGAKYGTGYCDSQCPRDLKFINGEANCDGWEPSSNNVNTGVGDHGSCCAEMDVWEANSISNAFTAHPCDSVSQTMCDGDSCGGTYSASGDRYSGTCDPDGCDYNPYRLGNTDFYGPGLTVDTNSPFTVVTQFITDDGTSSGTLTEIKRLYVQNGEVIANGASTYSSVNGSSITSAFCESEKTLFGDENVFDKHGGLEGMGEAMAKGMVLVLSLWDDYAADMLWLDSDYPVNSSASTPGVARGTCSTDSGVPATVEAESPNAYVTYSNIKFGPIGSTYSSGSSSGSGSSSSSSSTTTKATSTTLKTTSTTSSGSSSTSAAQAYGQCGGQGWTGPTTCVSGYTCTYENAYYSQCL.

A signal peptide spans 1–21; it reads MSSFQVYRAALLLSILATANA. The catalytic stretch occupies residues 22-458; it reads QQVGTYTTET…SNIKFGPIGS (437 aa). Glutamate 233 acts as the Nucleophile in catalysis. The Proton donor role is filled by glutamate 238. N-linked (GlcNAc...) asparagine glycosylation is found at asparagine 351 and asparagine 414. Residues 459-500 form a ser/Thr-rich linker region; sequence TYSSGSSSGSGSSSSSSSTTTKATSTTLKTTSTTSSGSSSTS. The tract at residues 464–499 is disordered; sequence SSSGSGSSSSSSSTTTKATSTTLKTTSTTSSGSSST. A CBM1 domain is found at 500–536; the sequence is SAAQAYGQCGGQGWTGPTTCVSGYTCTYENAYYSQCL. Intrachain disulfides connect cysteine 508-cysteine 525 and cysteine 519-cysteine 535.

It belongs to the glycosyl hydrolase 7 (cellulase C) family.

The protein resides in the secreted. The enzyme catalyses Hydrolysis of (1-&gt;4)-beta-D-glucosidic linkages in cellulose and cellotetraose, releasing cellobiose from the non-reducing ends of the chains.. The biological conversion of cellulose to glucose generally requires three types of hydrolytic enzymes: (1) Endoglucanases which cut internal beta-1,4-glucosidic bonds; (2) Exocellobiohydrolases that cut the disaccharide cellobiose from the non-reducing end of the cellulose polymer chain; (3) Beta-1,4-glucosidases which hydrolyze the cellobiose and other short cello-oligosaccharides to glucose. The protein is Probable 1,4-beta-D-glucan cellobiohydrolase B (cbhB) of Aspergillus niger (strain ATCC MYA-4892 / CBS 513.88 / FGSC A1513).